The chain runs to 177 residues: Parathyroid hormone-related protein (177 aa).

Positions 1–24 (MLRRLVQQWSVAVFLLSYSVPSCG) are cleaved as a signal peptide. Positions 25–34 (RSVEGPGRRL) are excised as a propeptide. The interval 57 to 68 (RFFLHHLIAEIH) is important for receptor binding. A disordered region spans residues 74-177 (ATSEVSPNSK…PEPELDSRRH (104 aa)). Positions 76–90 (SEVSPNSKPAANTKN) are enriched in polar residues. The Nuclear localization signal motif lies at 108 to 129 (TNKVEPYKEQPLKTPGKKKKGK). A compositionally biased stretch (basic and acidic residues) spans 109–118 (NKVEPYKEQP). Residues 122–132 (PGKKKKGKPGK) show a composition bias toward basic residues.

The protein belongs to the parathyroid hormone family. PTHrP interacts with PTH1R (via N-terminal extracellular domain). Post-translationally, there are several secretory forms, including osteostatin, arising from endoproteolytic cleavage of the initial translation product. Each of these secretory forms is believed to have one or more of its own receptors that mediates the normal paracrine, autocrine and endocrine actions.

Its subcellular location is the secreted. It is found in the cytoplasm. It localises to the nucleus. Functionally, neuroendocrine peptide which is a critical regulator of cellular and organ growth, development, migration, differentiation and survival and of epithelial calcium ion transport. Acts by binding to its receptor, PTH1R, activating G protein-coupled receptor signaling. Regulates endochondral bone development and epithelial-mesenchymal interactions during the formation of the mammary glands and teeth. Required for skeletal homeostasis. Promotes mammary mesenchyme differentiation and bud outgrowth by modulating mesenchymal cell responsiveness to BMPs. Up-regulates BMPR1A expression in the mammary mesenchyme and this increases the sensitivity of these cells to BMPs and allows them to respond to BMP4 in a paracrine and/or autocrine fashion. BMP4 signaling in the mesenchyme, in turn, triggers epithelial outgrowth and augments MSX2 expression, which causes the mammary mesenchyme to inhibit hair follicle formation within the nipple sheath. Potent inhibitor of osteoclastic bone resorption. This is Parathyroid hormone-related protein (PTHLH) from Oryctolagus cuniculus (Rabbit).